The sequence spans 511 residues: Centrosomal protein CCDC61 (511 aa).

Position 1 is an N-acetylmethionine (Met-1). The segment at 1-143 is head domain; that stretch reads MDQPAGLQVD…PLPLPYQGKP (143 aa). Coiled coils occupy residues 176–203 and 246–273; these read IWHLREQVTRLTSEKRELEAQLGRSREE and SRRLAKELEEVKASERNLRARLKTLNSE. Thr-283 carries the phosphothreonine modification. Disordered regions lie at residues 284 to 413 and 429 to 476; these read LPPV…DSFR and SHSV…GGWV. Residues 290–302 are compositionally biased toward basic and acidic residues; that stretch reads REGRASSSRERST. Ser-330 and Ser-332 each carry phosphoserine. Residues 360-369 show a composition bias toward low complexity; that stretch reads KQQQQQRNRM. 2 positions are modified to phosphoserine: Ser-371 and Ser-374. The span at 433-442 shows a compositional bias: basic residues; that stretch reads SRSRRCRGRG. Ser-446 carries the post-translational modification Phosphoserine. Positions 449–458 are enriched in polar residues; that stretch reads PWSRSKTKST. The residue at position 472 (Ser-472) is a Phosphoserine.

It belongs to the CCDC61 family. In terms of assembly, forms homodimers (via head domain). Interacts with CEP170. Interacts with PCM1 and CEP131. Binds tubulin.

It is found in the cytoplasm. Its subcellular location is the cytoskeleton. The protein localises to the microtubule organizing center. It localises to the centrosome. The protein resides in the centriolar satellite. It is found in the cilium basal body. In terms of biological role, microtubule-binding centrosomal protein required for centriole cohesion, independently of the centrosome-associated protein/CEP250 and rootletin/CROCC linker. In interphase, required for anchoring microtubule at the mother centriole subdistal appendages and for centrosome positioning. During mitosis, may be involved in spindle assembly and chromatin alignment by regulating the organization of spindle microtubules into a symmetrical structure. Plays a non-essential role in ciliogenesis. This is Centrosomal protein CCDC61 from Mus musculus (Mouse).